We begin with the raw amino-acid sequence, 475 residues long: Ribulose bisphosphate carboxylase large chain (475 aa).

A propeptide spanning residues 1–2 (MS) is cleaved from the precursor. The residue at position 3 (Pro-3) is an N-acetylproline. Lys-14 is subject to N6,N6,N6-trimethyllysine. Substrate contacts are provided by Asn-123 and Thr-173. Lys-175 serves as the catalytic Proton acceptor. Lys-177 is a binding site for substrate. Mg(2+) contacts are provided by Lys-201, Asp-203, and Glu-204. An N6-carboxylysine modification is found at Lys-201. His-294 acts as the Proton acceptor in catalysis. Arg-295, His-327, and Ser-379 together coordinate substrate.

This sequence belongs to the RuBisCO large chain family. Type I subfamily. Heterohexadecamer of 8 large chains and 8 small chains; disulfide-linked. The disulfide link is formed within the large subunit homodimers. Requires Mg(2+) as cofactor. Post-translationally, the disulfide bond which can form in the large chain dimeric partners within the hexadecamer appears to be associated with oxidative stress and protein turnover.

It localises to the plastid. The protein resides in the chloroplast. The enzyme catalyses 2 (2R)-3-phosphoglycerate + 2 H(+) = D-ribulose 1,5-bisphosphate + CO2 + H2O. It catalyses the reaction D-ribulose 1,5-bisphosphate + O2 = 2-phosphoglycolate + (2R)-3-phosphoglycerate + 2 H(+). Its function is as follows. RuBisCO catalyzes two reactions: the carboxylation of D-ribulose 1,5-bisphosphate, the primary event in carbon dioxide fixation, as well as the oxidative fragmentation of the pentose substrate in the photorespiration process. Both reactions occur simultaneously and in competition at the same active site. The polypeptide is Ribulose bisphosphate carboxylase large chain (Carica papaya (Papaya)).